The following is a 503-amino-acid chain: Aromatase (503 aa).

2 residues coordinate substrate: aspartate 309 and methionine 374. Cysteine 437 provides a ligand contact to heme.

The protein belongs to the cytochrome P450 family. It depends on heme as a cofactor.

The protein localises to the membrane. It catalyses the reaction testosterone + 3 reduced [NADPH--hemoprotein reductase] + 3 O2 = 17beta-estradiol + formate + 3 oxidized [NADPH--hemoprotein reductase] + 4 H2O + 4 H(+). The catalysed reaction is androst-4-ene-3,17-dione + 3 reduced [NADPH--hemoprotein reductase] + 3 O2 = estrone + formate + 3 oxidized [NADPH--hemoprotein reductase] + 4 H2O + 4 H(+). Catalyzes the formation of aromatic C18 estrogens from C19 androgens. The sequence is that of Aromatase (CYP19A1) from Callithrix jacchus (White-tufted-ear marmoset).